Reading from the N-terminus, the 526-residue chain is pH-sensitive chloride channel 2 (526 aa).

The N-terminal stretch at 1-18 is a signal peptide; the sequence is MDTLGIFVLISYLGLSSA. At 19 to 300 the chain is on the extracellular side; the sequence is AGVHLGDLQQ…VLLTREVGYY (282 aa). N-linked (GlcNAc...) asparagine glycosylation is found at N33, N42, N52, N192, N231, N264, N271, and N283. The chain crosses the membrane as a helical span at residues 301–321; that stretch reads VIDYFLPSIMIVTISWVSFWL. At 322–327 the chain is on the cytoplasmic side; that stretch reads QADQTP. The helical transmembrane segment at 328 to 347 threads the bilayer; the sequence is ARTTLGCTTLLSFITLSLSQ. Over 348–360 the chain is Extracellular; it reads ENNLMKVSYVTMS. A helical transmembrane segment spans residues 361–381; sequence EVWFLVCTIFIFGSLVEFAFV. Residues 382 to 505 are Cytoplasmic-facing; that stretch reads NTIWRRNNDL…VSLWIDRKMR (124 aa). The interval 463–488 is disordered; that stretch reads ISLDEQDETSTSESSDSSKEKPAQTF. The helical transmembrane segment at 506 to 526 threads the bilayer; that stretch reads FVFPLSFIVFNALFWTLVYCL.

The protein belongs to the ligand-gated ion channel (TC 1.A.9) family. In third-instar larvae, expressed in the principal cells of the excretory Malpighian tubules (at protein level). Also detected in the enterocytes of the copper cell region and the iron cell region of the larval midgut (at protein level). In the copper cell region expression is confined to the interstitial cells and in the iron cell region it is expressed in the anterior portion (at protein level). Expressed in the Malpighian tubules and the middle midgut of third instar larvae and adults.

The protein localises to the apical cell membrane. It localises to the cell projection. It is found in the microvillus membrane. Its subcellular location is the late endosome membrane. The protein resides in the lysosome membrane. The enzyme catalyses chloride(in) = chloride(out). Functionally, ligand and pH-gated channel that mediates chloride transport primarily in the mid-gut and thereby functions in larval metabolism and fluid homeostasis. Channel opening is triggered by zinc binding or, to a lesser extent, an increase in extracellular pH. Zinc-dependent activity in the mid-gut is required for modulating Tor-dependent metabolic programs that promote larval feeding and systematic growth. It may therefore act as an intestinal zinc sensor that mediates larval growth and metabolism in response to micronutrient availability. Activates Tor signaling via its activity in maintaining lysosome homeostasis in interstitial cells and/or by its role in activating the release of insulin-like peptides in the brain after feeding, via an unknown mechanism. Functions in lysosome homeostasis by regulating chloride transport into enterocyte lysosomes to sustain V-ATPase function which maintains lysosomal acidification and consequently promotes Tor activation at the lysosome membrane. Also appears to play a role in regulating fluid secretion and osmotic homeostasis in Malpighian tubules in response to the pH of extracellular urine. This function is important for proper urine production during diuresis. The polypeptide is pH-sensitive chloride channel 2 (Drosophila melanogaster (Fruit fly)).